We begin with the raw amino-acid sequence, 517 residues long: MARAWGLLLAIGVILPTWLSSTKVSSLIERISDPKDLKKLLRTRNNVLVLYSESEVAAESHLKLLSTVAQAVKGQGTICWVDCGDAESRKLCKKMKVDLSPKDKKIELFHYQDGAFHMQYDRAVTLKSIVAFLKDPKGPPLWEEDPGAKDVVHIDSEKDFRRLLKKEEKPLLMMFYAPWCSMCKRIMPHFQKAATQVRGHTVLAGMNVYPPEFENIKEEYNVRGYPTICYFEKGRFLFQYENYGSTAEDIVEWLKNPQPPQPQVPETPWADEGGSVYHLTDEDFDQFVKEHSSVLVMFHAPWCGHCKKMKPEFESAAEVLHGDAESSGVLAAVDATINEALAERFHISAFPTLKYFKNGEQQAVPALRTKKKFIEWMQNPEAPPPPEPTWEEQQTSVLHLVGDNFRETLKKKKHTLVMFYAPWCPHCKKVIPHFTATADAFKDDRKIACAAVDCVKDKNQDLCQQESVKAYPTFHYYHYGKLVEKYESDRTELGFTSFIRTLREGDLKRLEKRREDL.

A signal peptide spans 1–21; that stretch reads MARAWGLLLAIGVILPTWLSS. Disulfide bonds link Cys-83-Cys-92, Cys-180-Cys-183, Cys-303-Cys-306, and Cys-424-Cys-427. Thioredoxin domains follow at residues 132–259, 268–382, and 376–504; these read FLKD…NPQP, PWAD…NPEA, and WMQN…TLRE. The short motif at 514–517 is the Prevents secretion from ER element; that stretch reads REDL.

This sequence belongs to the protein disulfide isomerase family.

It localises to the endoplasmic reticulum lumen. It catalyses the reaction Catalyzes the rearrangement of -S-S- bonds in proteins.. The polypeptide is Protein disulfide-isomerase A5 (Pdia5) (Rattus norvegicus (Rat)).